Here is a 146-residue protein sequence, read N- to C-terminus: Large ribosomal subunit protein uL15 (146 aa).

Over residues Met1–Arg13 the composition is skewed to basic and acidic residues. Positions Met1–Glu51 are disordered. 2 stretches are compositionally biased toward gly residues: residues Thr23–Gln35 and Ser42–Glu51.

It belongs to the universal ribosomal protein uL15 family. As to quaternary structure, part of the 50S ribosomal subunit.

In terms of biological role, binds to the 23S rRNA. This Streptococcus pyogenes serotype M1 protein is Large ribosomal subunit protein uL15.